The following is a 129-amino-acid chain: Cytochrome c-type protein SHP (129 aa).

An N-terminal signal peptide occupies residues 1-17 (MTRFLILSAVLAGPALA). Residues Cys-60, Cys-63, and His-64 each contribute to the heme c site. Cysteines 106 and 114 form a disulfide.

Post-translationally, binds 1 heme c group covalently per subunit.

Its function is as follows. High-spin cytochrome. Transiently bind oxygen during autoxidation, which occurs with a half-life of 3 minutes with a 4-fold excess of O(2). Also binds carbon monoxide, azide and cyanide. The polypeptide is Cytochrome c-type protein SHP (shp) (Cereibacter sphaeroides (strain ATCC 17023 / DSM 158 / JCM 6121 / CCUG 31486 / LMG 2827 / NBRC 12203 / NCIMB 8253 / ATH 2.4.1.) (Rhodobacter sphaeroides)).